Consider the following 127-residue polypeptide: Ribonuclease P protein component 1 (127 aa).

It belongs to the eukaryotic/archaeal RNase P protein component 1 family. Consists of a catalytic RNA component and at least 4-5 protein subunits.

Its subcellular location is the cytoplasm. It carries out the reaction Endonucleolytic cleavage of RNA, removing 5'-extranucleotides from tRNA precursor.. Functionally, part of ribonuclease P, a protein complex that generates mature tRNA molecules by cleaving their 5'-ends. This is Ribonuclease P protein component 1 from Pyrococcus abyssi (strain GE5 / Orsay).